We begin with the raw amino-acid sequence, 128 residues long: Large ribosomal subunit protein bL20c (128 aa).

The protein belongs to the bacterial ribosomal protein bL20 family.

The protein resides in the plastid. Its function is as follows. Binds directly to 23S ribosomal RNA and is necessary for the in vitro assembly process of the 50S ribosomal subunit. It is not involved in the protein synthesizing functions of that subunit. The polypeptide is Large ribosomal subunit protein bL20c (rpl20) (Lathraea clandestina (Purple toothwort)).